Reading from the N-terminus, the 522-residue chain is Maturase K (522 aa).

The protein belongs to the intron maturase 2 family. MatK subfamily.

The protein localises to the plastid. It is found in the chloroplast. In terms of biological role, usually encoded in the trnK tRNA gene intron. Probably assists in splicing its own and other chloroplast group II introns. In Iris danfordiae (Danford iris), this protein is Maturase K.